An 89-amino-acid polypeptide reads, in one-letter code: uncharacterized protein (89 aa).

This is an uncharacterized protein from Escherichia coli (strain K12).